Here is a 101-residue protein sequence, read N- to C-terminus: Small integral membrane protein 19 (101 aa).

A helical membrane pass occupies residues 25–43 (ATNVYLIVILVSIGLFMYA).

The protein belongs to the SMIM19 family.

The protein localises to the membrane. The protein is Small integral membrane protein 19 (smim19) of Xenopus tropicalis (Western clawed frog).